Reading from the N-terminus, the 220-residue chain is Small ribosomal subunit protein uS3 (220 aa).

The region spanning 43-111 (IRSYLTKTLD…QVQLNILEVK (69 aa)) is the KH type-2 domain.

Belongs to the universal ribosomal protein uS3 family. As to quaternary structure, part of the 30S ribosomal subunit. Forms a tight complex with proteins S10 and S14.

Its function is as follows. Binds the lower part of the 30S subunit head. Binds mRNA in the 70S ribosome, positioning it for translation. This chain is Small ribosomal subunit protein uS3, found in Tropheryma whipplei (strain TW08/27) (Whipple's bacillus).